Consider the following 861-residue polypeptide: ToMV resistance protein Tm-2(2) (861 aa).

Residues 63-83 (VKNLLKDIQELAGDVEDLLDD) are a coiled coil. The 227-residue stretch at 162-388 (DDFNMLQAKL…LESMGHKVQD (227 aa)) folds into the NB-ARC domain. 185–192 (GMPGLGKT) is a binding site for ATP. LRR repeat units lie at residues 225 to 248 (LDIA…NLRS), 305 to 327 (LHAL…IFNF), 388 to 411 (DGCA…CFLY), 449 to 472 (LAED…TYNG), 510 to 536 (VARL…KLEK), 585 to 608 (MTCL…IVKL), 609 to 631 (TRLE…VWES), 652 to 680 (ISSF…FFEP), 689 to 710 (LRKL…IFSP), 712 to 735 (LKAL…LSSY), 736 to 758 (PHIA…SFPP), 784 to 810 (LRKL…GYSF), and 811 to 835 (PQLE…DVSM).

This sequence belongs to the disease resistance NB-LRR family. In terms of assembly, (Microbial infection) Interacts with tobamoviruses mouvement protein (e.g. tobacco mosaic virus (TMV) MP, AC P03583) at the plasma membrane; this interaction triggers defense responses leading to programmed cell death. As to quaternary structure, binds to HSP90 proteins (e.g. HSP90-1 and Nicotiana benthamiana HSP90-1); this interaction seems required for defense responses toward tobamoviruses.

Its subcellular location is the cell membrane. Its function is as follows. Inhibitor of viral mouvements which confers resistance to some tobamoviruses including tomato mosaic virus (ToMV) (e.g. strains L, B7 and ToMV1-2) and tobacco mosaic virus (TMV), but not to resistance-breaking isolates (e.g. LIIA and ToMV2(2)) ToMV and tomato brown rugose fruit virus (ToBRFV). Elicits a hypersensitive reaction in response to avirulent (Avr) movement proteins from resistance inducing tobamoviruses (e.g. ToMV and TMV) strains, thus leading to programmed cell death; this local extreme resistance requires rbcS. This chain is ToMV resistance protein Tm-2(2), found in Solanum lycopersicum (Tomato).